The sequence spans 751 residues: Cytosolic neutral trehalase (751 aa).

Residues 1–15 (MDDSALPSNTSNGIN) are compositionally biased toward polar residues. Disordered regions lie at residues 1–42 (MDDS…NPES) and 64–88 (DFHE…NPRK). The segment covering 64–78 (DFHEMLGDRNTRRGS) has biased composition (basic and acidic residues). Ca(2+)-binding residues include Asp105, Asp107, Asn109, Gln111, and Asp116. Substrate-binding positions include Arg292, 299–300 (WD), Asn336, 345–347 (RSQ), Glu412, Arg461, and Gly464. Catalysis depends on proton donor/acceptor residues Asp466 and Glu670.

The protein belongs to the glycosyl hydrolase 37 family. The cofactor is Ca(2+).

The protein localises to the cytoplasm. The enzyme catalyses alpha,alpha-trehalose + H2O = alpha-D-glucose + beta-D-glucose. It participates in carbohydrate degradation. Activated by calcium. In terms of biological role, hydrolyzes intracellular trehalose to glucose. The disaccharide trehalose serves as a storage carbohydrate that is mobilized during conidial germination. Regulates the level of trehalose as a protectant for cell integrity during heat stress. The chain is Cytosolic neutral trehalase from Emericella nidulans (strain FGSC A4 / ATCC 38163 / CBS 112.46 / NRRL 194 / M139) (Aspergillus nidulans).